We begin with the raw amino-acid sequence, 27 residues long: uncharacterized protein (27 aa).

It localises to the plastid. The protein resides in the chloroplast. This is an uncharacterized protein from Marchantia polymorpha (Common liverwort).